The primary structure comprises 378 residues: tRNA (guanine(26)-N(2))-dimethyltransferase (378 aa).

The 371-residue stretch at 4–374 (KEVTEGKVRI…KEYEEITKCI (371 aa)) folds into the Trm1 methyltransferase domain. S-adenosyl-L-methionine-binding residues include Arg44, Arg69, Asp87, Asp114, and Ala115. Residues Cys246, Cys249, Cys263, and Cys266 each coordinate Zn(2+).

Belongs to the class I-like SAM-binding methyltransferase superfamily. Trm1 family.

It carries out the reaction guanosine(26) in tRNA + 2 S-adenosyl-L-methionine = N(2)-dimethylguanosine(26) in tRNA + 2 S-adenosyl-L-homocysteine + 2 H(+). Functionally, dimethylates a single guanine residue at position 26 of a number of tRNAs using S-adenosyl-L-methionine as donor of the methyl groups. In Saccharolobus solfataricus (strain ATCC 35092 / DSM 1617 / JCM 11322 / P2) (Sulfolobus solfataricus), this protein is tRNA (guanine(26)-N(2))-dimethyltransferase.